Consider the following 844-residue polypeptide: Penicillin-binding protein 1B (844 aa).

A compositionally biased stretch (basic and acidic residues) spans 1-10 (MAGNDREPIG). A disordered region spans residues 1–60 (MAGNDREPIGRKGKPTRPVKQKVSRRRYEDDDDYDDYDDYEDEEPMPRKGKGKGKGRKPR). The Cytoplasmic segment spans residues 1–63 (MAGNDREPIG…GKGRKPRGKR (63 aa)). A compositionally biased stretch (basic residues) spans 11-25 (RKGKPTRPVKQKVSR). A compositionally biased stretch (acidic residues) spans 30 to 44 (DDDDYDDYDDYEDEE). The span at 48-60 (RKGKGKGKGRKPR) shows a compositional bias: basic residues. The chain crosses the membrane as a helical; Signal-anchor for type II membrane protein span at residues 64–87 (GWLWLLLKLAIVFAVLIAIYGVYL). The membrane association stretch occupies residues 88–250 (DQKIRSRIDG…DGISLYSIGR (163 aa)). The Periplasmic portion of the chain corresponds to 88–844 (DQKIRSRIDG…GWIKDMFGSN (757 aa)). The uvrB domain 2 homolog stretch occupies residues 109 to 200 (RMVNLEPDMT…QFGFFRLDPR (92 aa)). The segment at 195–367 (FRLDPRLITM…SIYNPWRNPK (173 aa)) is transglycosylase. Catalysis depends on glutamate 233, which acts as the Proton donor; for transglycosylase activity. Positions 444 to 736 (SVAQDAAEKA…NNQPTKLYGA (293 aa)) are transpeptidase. The active-site Acyl-ester intermediate; for transpeptidase activity is serine 510. Residues 793–825 (LCQQSEMQQQPSGNPFDQSSQPQQQPQQQPAQQ) show a composition bias toward low complexity. A disordered region spans residues 793-835 (LCQQSEMQQQPSGNPFDQSSQPQQQPQQQPAQQEQKDSDGVAG).

The protein in the N-terminal section; belongs to the glycosyltransferase 51 family. It in the C-terminal section; belongs to the transpeptidase family. In terms of assembly, forms a trimeric complex with MipA and MltA. Has also been shown to exist as monomer or homodimer; homodimer of Alpha and Gamma isozymes can be found. Interacts with UvrA, FtsL and FtsN.

It is found in the cell inner membrane. The enzyme catalyses [GlcNAc-(1-&gt;4)-Mur2Ac(oyl-L-Ala-gamma-D-Glu-L-Lys-D-Ala-D-Ala)](n)-di-trans,octa-cis-undecaprenyl diphosphate + beta-D-GlcNAc-(1-&gt;4)-Mur2Ac(oyl-L-Ala-gamma-D-Glu-L-Lys-D-Ala-D-Ala)-di-trans,octa-cis-undecaprenyl diphosphate = [GlcNAc-(1-&gt;4)-Mur2Ac(oyl-L-Ala-gamma-D-Glu-L-Lys-D-Ala-D-Ala)](n+1)-di-trans,octa-cis-undecaprenyl diphosphate + di-trans,octa-cis-undecaprenyl diphosphate + H(+). The catalysed reaction is Preferential cleavage: (Ac)2-L-Lys-D-Ala-|-D-Ala. Also transpeptidation of peptidyl-alanyl moieties that are N-acyl substituents of D-alanine.. It functions in the pathway cell wall biogenesis; peptidoglycan biosynthesis. Cell wall formation. Synthesis of cross-linked peptidoglycan from the lipid intermediates. The enzyme has a penicillin-insensitive transglycosylase N-terminal domain (formation of linear glycan strands) and a penicillin-sensitive transpeptidase C-terminal domain (cross-linking of the peptide subunits). The chain is Penicillin-binding protein 1B (mrcB) from Escherichia coli (strain K12).